The chain runs to 572 residues: Probable lysosomal cobalamin transporter (572 aa).

Helical transmembrane passes span 8 to 28, 40 to 60, 95 to 115, 145 to 165, 188 to 208, 314 to 334, 374 to 394, 421 to 441, and 499 to 519; these read VIWF…SVFI, FVTF…MLLP, IIYY…IPFA, TLTF…APMM, AFTF…AFYT, GGFC…MTVV, IIFA…VVAV, AVLT…LVPG, and VALN…LFLA. The interval 522 to 544 is disordered; sequence GRRRGRGRESVSKHQKKRQSYMR.

This sequence belongs to the LIMR family. LMBRD1 subfamily.

It is found in the lysosome membrane. Probable lysosomal cobalamin transporter. Required to export cobalamin from lysosomes allowing its conversion to cofactors. The polypeptide is Probable lysosomal cobalamin transporter (Aspergillus fumigatus (strain ATCC MYA-4609 / CBS 101355 / FGSC A1100 / Af293) (Neosartorya fumigata)).